The chain runs to 119 residues: Large ribosomal subunit protein bL20 (119 aa).

It belongs to the bacterial ribosomal protein bL20 family.

Its function is as follows. Binds directly to 23S ribosomal RNA and is necessary for the in vitro assembly process of the 50S ribosomal subunit. It is not involved in the protein synthesizing functions of that subunit. The chain is Large ribosomal subunit protein bL20 from Legionella pneumophila (strain Paris).